We begin with the raw amino-acid sequence, 260 residues long: Intermembrane phospholipid transport system permease protein MlaE (260 aa).

Over 1 to 50 (MLLNALASLGHKGIKTLRTFGRAGLMLFNALVGKPEFRKHAPLLVRQLYN) the chain is Cytoplasmic. A helical transmembrane segment spans residues 51-71 (VGVLSMLIIVVSGVFIGMVLG). Topologically, residues 72-88 (LQGYLVLTTYSAETSLG) are periplasmic. Residues 89–109 (MLVALSLLRELGPVVAALLFA) traverse the membrane as a helical segment. The Cytoplasmic segment spans residues 110–147 (GRAGSALTAEIGLMRATEQLSSMEMMAVDPLRRVISPR). The helical transmembrane segment at 148 to 168 (FWAGVISLPLLTVIFVAVGIW) threads the bilayer. At 169–198 (GGSLVGVSWKGIDSGFFWSAMQNAVDWRMD) the chain is on the periplasmic side. Residues 199–219 (LVNCLIKSVVFAITVTWISLF) form a helical membrane-spanning segment. Over 220 to 238 (NGYDAIPTSAGISRATTRT) the chain is Cytoplasmic. The helical transmembrane segment at 239–259 (VVHSSLAVLGLDFVLTALMFG) threads the bilayer. A topological domain (periplasmic) is located at residue Asn260.

This sequence belongs to the MlaE permease family. As to quaternary structure, the complex is composed of two ATP-binding proteins (MlaF), two transmembrane proteins (MlaE), two cytoplasmic solute-binding proteins (MlaB) and six periplasmic solute-binding proteins (MlaD).

The protein resides in the cell inner membrane. Part of the ABC transporter complex MlaFEDB, which is involved in a phospholipid transport pathway that maintains lipid asymmetry in the outer membrane by retrograde trafficking of phospholipids from the outer membrane to the inner membrane. Probably responsible for the translocation of the substrate across the membrane. This is Intermembrane phospholipid transport system permease protein MlaE from Escherichia coli O157:H7.